The primary structure comprises 302 residues: Deoxyhypusine hydroxylase (302 aa).

HEAT-like PBS-type repeat units follow at residues glutamate 23 to aspartate 49, leucine 54 to aspartate 80, valine 87 to aspartate 113, aspartate 175 to aspartate 201, phenylalanine 206 to aspartate 232, and valine 239 to aspartate 265. The Fe cation site is built by histidine 56, glutamate 57, histidine 89, and glutamate 90. Fe cation contacts are provided by histidine 208, glutamate 209, histidine 241, and glutamate 242.

The protein belongs to the deoxyhypusine hydroxylase family. It depends on Fe(2+) as a cofactor.

Its subcellular location is the endoplasmic reticulum membrane. The catalysed reaction is [eIF5A protein]-deoxyhypusine + AH2 + O2 = [eIF5A protein]-hypusine + A + H2O. It functions in the pathway protein modification; eIF5A hypusination. Catalyzes the hydroxylation of the N(6)-(4-aminobutyl)-L-lysine intermediate to form hypusine, an essential post-translational modification only found in mature eIF-5A factor. Essential for organismal viability and plays a role in a wide number of important processes such as cell growth and proliferation, and regulates induction of autophagy and protein synthesis. Has a role in eIF-5A-mediated translational control. This Drosophila melanogaster (Fruit fly) protein is Deoxyhypusine hydroxylase.